Here is a 126-residue protein sequence, read N- to C-terminus: Topoisomerase I damage affected protein 8 (126 aa).

The PA14 domain occupies 1-110; it reads MTGYFLPPQT…VTTVSDDFAG (110 aa).

This sequence belongs to the flocculin family.

In Saccharomyces cerevisiae (strain ATCC 204508 / S288c) (Baker's yeast), this protein is Topoisomerase I damage affected protein 8 (TDA8).